A 286-amino-acid chain; its full sequence is Nucleotide-binding protein PLES_48441 (286 aa).

8–15 (GRSGSGKS) provides a ligand contact to ATP. 60-63 (DARN) contacts GTP.

It belongs to the RapZ-like family.

In terms of biological role, displays ATPase and GTPase activities. The protein is Nucleotide-binding protein PLES_48441 of Pseudomonas aeruginosa (strain LESB58).